The primary structure comprises 217 residues: Ras-related protein RABA2d (217 aa).

19–26 (GDSGVGKT) is a binding site for GTP. The Effector region signature appears at 41–49 (SKSTIGVEF). GTP contacts are provided by residues 67 to 71 (DTAGQ), 125 to 128 (NKAD), and 155 to 156 (SA). The tract at residues 196-217 (GQGTTINVEDTSGAGKRGCCST) is disordered. S-geranylgeranyl cysteine attachment occurs at residues cysteine 214 and cysteine 215.

This sequence belongs to the small GTPase superfamily. Rab family. As to expression, expressed in root tips.

It is found in the endosome membrane. Its subcellular location is the golgi apparatus. It localises to the trans-Golgi network membrane. Intracellular vesicle trafficking and protein transport. The sequence is that of Ras-related protein RABA2d (RABA2D) from Arabidopsis thaliana (Mouse-ear cress).